Reading from the N-terminus, the 266-residue chain is Small ribosomal subunit protein uS2 (266 aa).

It belongs to the universal ribosomal protein uS2 family.

The sequence is that of Small ribosomal subunit protein uS2 from Corynebacterium diphtheriae (strain ATCC 700971 / NCTC 13129 / Biotype gravis).